The chain runs to 353 residues: Photosystem II D2 protein (353 aa).

Thr-2 bears the N-acetylthreonine mark. Thr-2 is subject to Phosphothreonine. A helical transmembrane segment spans residues 41-61 (CAYFALGGWFTGTTFVTSWYT). His-118 contacts chlorophyll a. The helical transmembrane segment at 125–141 (GFMLRQFEIARSVNLRP) threads the bilayer. The pheophytin a site is built by Gln-130 and Asn-143. Residues 153–166 (VFVSVFLIYPLGQS) traverse the membrane as a helical segment. His-198 lines the chlorophyll a pocket. A helical membrane pass occupies residues 208 to 228 (AALLCAIHGATVENTLFEDGD). 2 residues coordinate a plastoquinone: His-215 and Phe-262. Residue His-215 coordinates Fe cation. His-269 contacts Fe cation. A helical transmembrane segment spans residues 279-295 (GLWMSAIGVVGLALNLR).

Belongs to the reaction center PufL/M/PsbA/D family. In terms of assembly, PSII is composed of 1 copy each of membrane proteins PsbA, PsbB, PsbC, PsbD, PsbE, PsbF, PsbH, PsbI, PsbJ, PsbK, PsbL, PsbM, PsbT, PsbX, PsbY, PsbZ, Psb30/Ycf12, at least 3 peripheral proteins of the oxygen-evolving complex and a large number of cofactors. It forms dimeric complexes. It depends on The D1/D2 heterodimer binds P680, chlorophylls that are the primary electron donor of PSII, and subsequent electron acceptors. It shares a non-heme iron and each subunit binds pheophytin, quinone, additional chlorophylls, carotenoids and lipids. There is also a Cl(-1) ion associated with D1 and D2, which is required for oxygen evolution. The PSII complex binds additional chlorophylls, carotenoids and specific lipids. as a cofactor.

Its subcellular location is the plastid. The protein resides in the chloroplast thylakoid membrane. The catalysed reaction is 2 a plastoquinone + 4 hnu + 2 H2O = 2 a plastoquinol + O2. Its function is as follows. Photosystem II (PSII) is a light-driven water:plastoquinone oxidoreductase that uses light energy to abstract electrons from H(2)O, generating O(2) and a proton gradient subsequently used for ATP formation. It consists of a core antenna complex that captures photons, and an electron transfer chain that converts photonic excitation into a charge separation. The D1/D2 (PsbA/PsbD) reaction center heterodimer binds P680, the primary electron donor of PSII as well as several subsequent electron acceptors. D2 is needed for assembly of a stable PSII complex. The protein is Photosystem II D2 protein of Tetradesmus obliquus (Green alga).